A 145-amino-acid polypeptide reads, in one-letter code: Plastocyanin, chloroplastic (145 aa).

Residues 1–48 (MASLMRKAAVAPAKATRTTVKASASLQRVAQAAGVAVAGFSLALSANA) constitute a chloroplast transit peptide. A Plastocyanin-like domain is found at 49-145 (ANVKLGADSG…AGMVGKVIVQ (97 aa)). Positions 85, 130, 133, and 138 each coordinate Cu cation.

Belongs to the plastocyanin family. Cu(2+) serves as cofactor.

The protein resides in the plastid. The protein localises to the chloroplast thylakoid membrane. Its function is as follows. Participates in electron transfer between P700 and the cytochrome b6-f complex in photosystem I. The sequence is that of Plastocyanin, chloroplastic (PETE) from Tetradesmus obliquus (Green alga).